Here is a 332-residue protein sequence, read N- to C-terminus: MRLAIDAMGGDHAPKEVVLGAMDAVKELDVEITLYGDENQISPHLTNNKNITIVHTEEVITSNDEPVRAVRRKKNASLVLMANAVKEKQADACISAGNTGALMSAGLFVVGRIPGIDRPALSPTLPTVDGKGFLMLDVGANVDAKPDHLLQYAIMGSIYSEKVRKIQQPRVGLLNVGTEDGKGNDLTKKAFELLQSAPINFVGNVEARDILNGVADVVVTDGFSGNVALKTIEGTAETIFSLLKGTLMSSTKTKLAAALVKKDLGGLKDKLDYSEYGGAGLFGLAAPVIKAHGSSNARAIYNAIKQAKHMVEFEVTPTITATVESIGKVEEE.

It belongs to the PlsX family. As to quaternary structure, homodimer. Probably interacts with PlsY.

Its subcellular location is the cytoplasm. It catalyses the reaction a fatty acyl-[ACP] + phosphate = an acyl phosphate + holo-[ACP]. It participates in lipid metabolism; phospholipid metabolism. In terms of biological role, catalyzes the reversible formation of acyl-phosphate (acyl-PO(4)) from acyl-[acyl-carrier-protein] (acyl-ACP). This enzyme utilizes acyl-ACP as fatty acyl donor, but not acyl-CoA. The polypeptide is Phosphate acyltransferase (Oceanobacillus iheyensis (strain DSM 14371 / CIP 107618 / JCM 11309 / KCTC 3954 / HTE831)).